The sequence spans 561 residues: Probable oligo-1,6-glucosidase 2 (561 aa).

Asp199 functions as the Nucleophile in the catalytic mechanism. Catalysis depends on Glu255, which acts as the Proton donor.

This sequence belongs to the glycosyl hydrolase 13 family.

Its subcellular location is the cytoplasm. The enzyme catalyses Hydrolysis of (1-&gt;6)-alpha-D-glucosidic linkages in some oligosaccharides produced from starch and glycogen by alpha-amylase, and in isomaltose.. In Bacillus subtilis (strain 168), this protein is Probable oligo-1,6-glucosidase 2 (ycdG).